Here is a 487-residue protein sequence, read N- to C-terminus: Betaine aldehyde dehydrogenase (487 aa).

2 residues coordinate K(+): Ile-27 and Asp-93. Position 149-151 (149-151 (GAW)) interacts with NAD(+). Lys-161 serves as the catalytic Charge relay system. Residues 175 to 178 (KPSE) and 228 to 231 (SVPT) contribute to the NAD(+) site. Residue Leu-243 coordinates K(+). Glu-249 (proton acceptor) is an active-site residue. NAD(+) is bound by residues Gly-251, Cys-283, and Glu-384. Cys-283 functions as the Nucleophile in the catalytic mechanism. Cysteine sulfenic acid (-SOH) is present on Cys-283. Residues Lys-454 and Gly-457 each contribute to the K(+) site. The active-site Charge relay system is Glu-461.

It belongs to the aldehyde dehydrogenase family. Dimer of dimers. It depends on K(+) as a cofactor.

The catalysed reaction is betaine aldehyde + NAD(+) + H2O = glycine betaine + NADH + 2 H(+). The protein operates within amine and polyamine biosynthesis; betaine biosynthesis via choline pathway; betaine from betaine aldehyde: step 1/1. In terms of biological role, involved in the biosynthesis of the osmoprotectant glycine betaine. Catalyzes the irreversible oxidation of betaine aldehyde to the corresponding acid. This chain is Betaine aldehyde dehydrogenase, found in Brucella melitensis biotype 2 (strain ATCC 23457).